The chain runs to 220 residues: Tumor protein p53-inducible nuclear protein 2 (220 aa).

Residues 1-12 (MFQRLSSLFFST) show a composition bias toward low complexity. 3 disordered regions span residues 1-24 (MFQRLSSLFFSTPSPPEDPDCPRA), 41-69 (PDSYAAPPSPGAAPAPAGRPPPAPSLMDE), and 119-220 (PGSP…QFNY). Serine 14 carries the post-translational modification Phosphoserine. The short motif at 26–41 (VSEEDEVDGWLIIDLP) is the LIR element. Residues 47 to 64 (PPSPGAAPAPAGRPPPAP) show a composition bias toward pro residues. Residue serine 136 is modified to Phosphoserine. Over residues 152–170 (HAAPLPARAALLEKAGQVR) the composition is skewed to low complexity. A compositionally biased stretch (polar residues) spans 205–220 (NQSSFIYQPCQRQFNY).

As to quaternary structure, interacts with VMP1, GABARAP, GABARAPL1, GABARAPL2, MAP1LC3A, MAP1LC3B, MAP1LC3C and THRA.

The protein localises to the cytoplasm. The protein resides in the cytosol. It localises to the nucleus. Its subcellular location is the PML body. It is found in the cytoplasmic vesicle. The protein localises to the autophagosome. In terms of biological role, dual regulator of transcription and autophagy. Positively regulates autophagy and is required for autophagosome formation and processing. May act as a scaffold protein that recruits MAP1LC3A, GABARAP and GABARAPL2 and brings them to the autophagosome membrane by interacting with VMP1 where, in cooperation with the BECN1-PI3-kinase class III complex, they trigger autophagosome development. Acts as a transcriptional activator of THRA. The protein is Tumor protein p53-inducible nuclear protein 2 (TP53INP2) of Homo sapiens (Human).